The sequence spans 346 residues: uncharacterized protein (346 aa).

Positions 10–109 (WDFIMTDPSS…SNSNGNNSPV (100 aa)) are disordered. A compositionally biased stretch (low complexity) spans 26–44 (KGSSKNGSPKTSSPKSGSP). A compositionally biased stretch (polar residues) spans 56-67 (NQQLLQNDSINL). Over residues 94-109 (KSSVVPSNSNGNNSPV) the composition is skewed to low complexity.

This is an uncharacterized protein from Dictyostelium discoideum (Social amoeba).